Reading from the N-terminus, the 243-residue chain is UMP-CMP kinase 2 (243 aa).

Residue 69-74 (GSGKGT) coordinates ATP. The interval 89–118 (SAGDLLRSEISTGREKGELILNIIKEGKIV) is NMP. Residues Arg-95, 116 to 118 (KIV), and 143 to 146 (GFPR) contribute to the a ribonucleoside 5'-phosphate site. Asn-150 is a CMP binding site. Positions 181-189 (GRNQGRVDD) are LID. Arg-182 is a binding site for ATP. Residues Arg-186 and Arg-197 each coordinate a ribonucleoside 5'-phosphate.

The protein belongs to the adenylate kinase family. UMP-CMP kinase subfamily. As to quaternary structure, monomer. Mg(2+) serves as cofactor.

The protein resides in the cytoplasm. Its subcellular location is the nucleus. The enzyme catalyses UMP + ATP = UDP + ADP. It carries out the reaction CMP + ATP = CDP + ADP. The catalysed reaction is dCMP + ATP = dCDP + ADP. Its function is as follows. Catalyzes the phosphorylation of pyrimidine nucleoside monophosphates at the expense of ATP. Plays an important role in de novo pyrimidine nucleotide biosynthesis. Has preference for UMP and CMP as phosphate acceptors. The polypeptide is UMP-CMP kinase 2 (Oryza sativa subsp. japonica (Rice)).